The chain runs to 394 residues: Ceramide glucosyltransferase-A (394 aa).

The Lumenal segment spans residues 1 to 10 (MAVLDLALQG). The helical transmembrane segment at 11–32 (LAIFGCVLFFVLWFMHFLSIVY) threads the bilayer. Residues 33–195 (TRLHLNKKIS…QVYFGTSHPR (163 aa)) lie on the Cytoplasmic side of the membrane. A short sequence motif (D1) is located at residue D92. Residue D144 is a short sequence motif, D2. Residues 196–215 (SYISANVTGFKCVTGMSCLM) form a helical membrane-spanning segment. At 216–287 (RKEVLDQAGG…KLRINMLPAT (72 aa)) the chain is on the lumenal side. D236 is a short sequence motif (D3). D236 (proton acceptor) is an active-site residue. Residues 272–276 (RMIRW) carry the (Q/R)XXRW motif. Residues 288–304 (IICEPISECFVASLIIG) traverse the membrane as a helical segment. Topologically, residues 305–309 (WAAHH) are cytoplasmic. A helical transmembrane segment spans residues 310–328 (IFRWDIMVFFMCHCLAWFI). The Lumenal portion of the chain corresponds to 329 to 348 (FDYIQLRGVQGGPLNFSKLD). The chain crosses the membrane as a helical span at residues 349 to 369 (YAVAWFIRESMTIYIFLSALW). Over 370-394 (DPTISWRTGRFRLRCGGTAEEILDV) the chain is Cytoplasmic.

The protein belongs to the glycosyltransferase 2 family. As to expression, at the late gastrula stage, weakly expressed ubiquitously. As neurulation proceeds (stages 15-16), expression moves towards the dorsal structures: involuted paraxial mesoderm and neural folds. In the tailbud embryo (stage 28), expression is restricted to the notochord. At later stages (stage 35), expression remains in the notochord and also appears weakly in the cephalic region.

It localises to the golgi apparatus membrane. The catalysed reaction is an N-acylsphing-4-enine + UDP-alpha-D-glucose = a beta-D-glucosyl-(1&lt;-&gt;1')-N-acylsphing-4-enine + UDP + H(+). It carries out the reaction UDP-alpha-D-xylose + an N-acylsphing-4-enine = a beta-D-xylosyl-(1&lt;-&gt;1')-N-acylsphing-4-enine + UDP + H(+). It catalyses the reaction N-(9Z-octadecenoyl)-sphing-4-enine + UDP-alpha-D-xylose = beta-D-xylosyl-(1&lt;-&gt;1')-N-(9Z-octadecenoyl)-sphing-4-enine + UDP + H(+). It participates in lipid metabolism; sphingolipid metabolism. In terms of biological role, participates in the initial step of the glucosylceramide-based glycosphingolipid/GSL synthetic pathway at the cytosolic surface of the Golgi. Catalyzes the transfer of glucose from UDP-glucose to ceramide to produce glucosylceramide/GlcCer (such as beta-D-glucosyl-(1&lt;-&gt;1')-N-acylsphing-4-enine). Glucosylceramide is the core component of glycosphingolipids/GSLs, amphipathic molecules consisting of a ceramide lipid moiety embedded in the outer leaflet of the membrane, linked to one of hundreds of different externally oriented oligosaccharide structures. Glycosphingolipids are essential components of membrane microdomains that mediate membrane trafficking and signal transduction. They are implicated in many fundamental cellular processes, including growth, differentiation, migration, morphogenesis, cell-to-cell and cell-to-matrix interactions. Glycosphingolipids are required for convergence extension movements during early development. Catalyzes the synthesis of xylosylceramide/XylCer (such as beta-D-xylosyl-(1&lt;-&gt;1')-N-acylsphing-4-enine) using UDP-Xyl as xylose donor. In Xenopus laevis (African clawed frog), this protein is Ceramide glucosyltransferase-A (ugcg-a).